Reading from the N-terminus, the 90-residue chain is High mobility group nucleosome-binding domain-containing protein 4 (90 aa).

The interval 1–90 (MPKRKAKGDA…QKAEGTGDAK (90 aa)) is disordered. The span at 7-23 (KGDAKGDKGKVKDEPQR) shows a compositional bias: basic and acidic residues. ADP-ribosylserine is present on Ser-29. Residues 37 to 64 (PEPRPKKAPAKKGEKLAKGRKGKAEVSK) show a composition bias toward basic and acidic residues. Polar residues predominate over residues 65–83 (DGNNPAKNRDASTVQSQKA). Position 80 is a phosphoserine (Ser-80). Lys-82 carries the N6-acetyllysine modification.

This sequence belongs to the HMGN family.

It localises to the nucleus. The polypeptide is High mobility group nucleosome-binding domain-containing protein 4 (HMGN4) (Bos taurus (Bovine)).